A 364-amino-acid chain; its full sequence is Succinate--CoA ligase [ADP-forming] subunit beta (364 aa).

Residues 9–229 enclose the ATP-grasp domain; it reads KNIFKKYGIP…EFEEYKNKEK (221 aa). ATP contacts are provided by residues Lys43, 50–52, Glu89, Leu92, and Glu97; that span reads GRG. Mg(2+)-binding residues include Asn189 and Asp203. Substrate-binding positions include Asn246 and 303–305; that span reads GIT.

This sequence belongs to the succinate/malate CoA ligase beta subunit family. In terms of assembly, heterotetramer of two alpha and two beta subunits. The cofactor is Mg(2+).

The enzyme catalyses succinate + ATP + CoA = succinyl-CoA + ADP + phosphate. It carries out the reaction GTP + succinate + CoA = succinyl-CoA + GDP + phosphate. It participates in carbohydrate metabolism; tricarboxylic acid cycle; succinate from succinyl-CoA (ligase route): step 1/1. Functionally, succinyl-CoA synthetase functions in the citric acid cycle (TCA), coupling the hydrolysis of succinyl-CoA to the synthesis of either ATP or GTP and thus represents the only step of substrate-level phosphorylation in the TCA. The beta subunit provides nucleotide specificity of the enzyme and binds the substrate succinate, while the binding sites for coenzyme A and phosphate are found in the alpha subunit. This Methanocaldococcus jannaschii (strain ATCC 43067 / DSM 2661 / JAL-1 / JCM 10045 / NBRC 100440) (Methanococcus jannaschii) protein is Succinate--CoA ligase [ADP-forming] subunit beta.